A 411-amino-acid chain; its full sequence is KIN17-like protein (411 aa).

The C2H2-type zinc finger occupies 28–50; the sequence is CQMCQKQCRDENGFKCHCMSESH. Positions 51–160 are winged helix-turn-helix (wHTH); sequence QRQMQVFGQN…KERLKNKRVK (110 aa). The stretch at 147-183 forms a coiled coil; it reads ETLFKERLKNKRVKSDLAEEEKQEREIQRQIERAAEK. 2 disordered regions span residues 182–211 and 232–286; these read EKLN…KKDE and VATG…EEEK. Residues 253–286 show a composition bias toward basic and acidic residues; it reads KVERGEKRKRSGDSGRSEKERRSALDELMKEEEK. Positions 259–262 match the Nuclear localization signal (NLS) motif; the sequence is KRKR. Residues 265–294 are a coiled coil; the sequence is DSGRSEKERRSALDELMKEEEKKKERMNRK. The tract at residues 301–352 is C-terminal subdomain A; the sequence is GIIVKVMSKALAEKGYYKQKGVVKKVIDNYVGEIKMLDSKHVLRVDQKELET. The interval 358 to 409 is C-terminal subdomain B; the sequence is GGMVKIVNGAYRGSNARLLGVDTEKFCAKVQIEKGVYDGRVIKSIEYEDICK.

The protein belongs to the KIN17 family. As to quaternary structure, interacts with SPL7. As to expression, expressed in root vasculature, lateral roots, cotyledons, rosette leaves, cauline leaves, stems, sepals, style of pistils, mature pollen grains and siliques.

The protein resides in the nucleus speckle. In terms of biological role, promotes the copper deficiency response by direct interaction with SPL7. Acts with SPL7 in a common pathway to promote copper-responsive genes and alleviate oxidative stress during copper-limiting periods. May promote SPL7 function when copper is limiting. Participates in the control of general plant growth and development, and in the response to counteract the negative effects of UV radiation. In Arabidopsis thaliana (Mouse-ear cress), this protein is KIN17-like protein.